The sequence spans 482 residues: MLKIHNSQSKQLEDFTPLTPGQVKMYVCGPTVYNFLHVGNFRGPVVFNMVRNWLEHLGYKVTYALNFTDVDDKIINRANELGMSPTELSEKYIAEYKKDFASLGLRPHDMNPKVTEHMDDIRSMVESLVSQKKAYEAQGDVLYSIESFKDYGKLSGRNTDDLLAGARVEVDEKKRNPMDFALWKAAKPGEVSWPSPWGPGRPGWHIECSAMIKNLFGDQIDIHGGGMDLIFPHHENEIAQSEGCTGKAFVKYWMHNNMLNFGGQKMSKSLGNIVTMREFLEMYNAEIYKWMILSAHYRTLSDFGDEAVERAVGGLSRVYSALSMAESYLTPEVTQEDAAFAKITQDAWKKVEEAMNHDFGTPDAFAAMFEVVRQFNAQVRRGMKANPAIQGKALAFHNFVRKMGSMMSLFQEPAHAFLIKLDDMLLKKMNLERSAVDALVAERGEARAAKDFAKSDELRAKITALGISVSDTPEGSFWEVTK.

C28 contributes to the Zn(2+) binding site. A 'HIGH' region motif is present at residues 30-40; it reads PTVYNFLHVGN. C208, H233, and E237 together coordinate Zn(2+). The 'KMSKS' region signature appears at 265–269; that stretch reads KMSKS. K268 lines the ATP pocket.

This sequence belongs to the class-I aminoacyl-tRNA synthetase family. Monomer. It depends on Zn(2+) as a cofactor.

It is found in the cytoplasm. It catalyses the reaction tRNA(Cys) + L-cysteine + ATP = L-cysteinyl-tRNA(Cys) + AMP + diphosphate. The polypeptide is Cysteine--tRNA ligase (Bdellovibrio bacteriovorus (strain ATCC 15356 / DSM 50701 / NCIMB 9529 / HD100)).